Reading from the N-terminus, the 459-residue chain is UDP-N-acetylmuramoylalanine--D-glutamate ligase (459 aa).

120-126 provides a ligand contact to ATP; the sequence is GSNGKTT.

The protein belongs to the MurCDEF family.

The protein localises to the cytoplasm. The enzyme catalyses UDP-N-acetyl-alpha-D-muramoyl-L-alanine + D-glutamate + ATP = UDP-N-acetyl-alpha-D-muramoyl-L-alanyl-D-glutamate + ADP + phosphate + H(+). It functions in the pathway cell wall biogenesis; peptidoglycan biosynthesis. Its function is as follows. Cell wall formation. Catalyzes the addition of glutamate to the nucleotide precursor UDP-N-acetylmuramoyl-L-alanine (UMA). This is UDP-N-acetylmuramoylalanine--D-glutamate ligase from Lactobacillus acidophilus (strain ATCC 700396 / NCK56 / N2 / NCFM).